A 1969-amino-acid polypeptide reads, in one-letter code: Myosin-3 (1969 aa).

One can recognise a Myosin N-terminal SH3-like domain in the interval 33–82 (DSKKNCWIPDPEDGFVAAEIQSTTGEQVTVVTVKGNQITVKKDQCQEMNP). Residues 86–791 (DKTEDMANLT…VLAKLEDLRD (706 aa)) form the Myosin motor domain. Position 130 is an N6,N6,N6-trimethyllysine (K130). 179–186 (GESGAGKT) contacts ATP. 2 actin-binding regions span residues 667–689 (LNNL…IPNE) and 770–784 (KVGE…GVLA). Residues 794–823 (LSRIVTMFQSRIRSYLAKAEVRRRYEQQTG) form the IQ domain. A coiled-coil region spans residues 857 to 1969 (KEQEAMGELA…IRSSSNARFL (1113 aa)). 4 disordered regions span residues 942 to 966 (MQER…TKKH), 1006 to 1029 (NKEK…EEDK), 1131 to 1213 (LEEE…GDSV), and 1234 to 1255 (KSKL…VRSR). Basic and acidic residues-rich tracts occupy residues 1137–1164 (AERN…ERLE) and 1176–1197 (ANKK…DSLN).

The protein belongs to the TRAFAC class myosin-kinesin ATPase superfamily. Myosin family. In terms of assembly, muscle myosin is a hexameric protein that consists of 2 heavy chain subunits (MHC), 2 alkali light chain subunits (MLC) and 2 regulatory light chain subunits (MLC-2). In terms of tissue distribution, expressed in body wall muscles, neighboring vulval muscle cells and the contractile sheath covering the hermaphrodite gonad (myoepithelial sheath cells).

The protein localises to the cytoplasm. Its subcellular location is the myofibril. It localises to the sarcomere. The protein resides in the a band. In terms of biological role, essential for muscle contraction. Involved in ovulation likely by regulating the contraction of gonadal myoepithelial sheath cells. The sequence is that of Myosin-3 (myo-3) from Caenorhabditis elegans.